The sequence spans 257 residues: Uroplakin-1a (257 aa).

Topologically, residues 1 to 13 are cytoplasmic; that stretch reads MASAATEGEKGSP. The chain crosses the membrane as a helical span at residues 14–34; the sequence is VVVGLLVVGNIIILLSGLALF. The Extracellular segment spans residues 35–58; sequence AETVWVTADQYRVYPLMGVSGKDD. A helical transmembrane segment spans residues 59 to 85; the sequence is VFAGAWIAIFCGFSFFVVASFGVGAAL. The Cytoplasmic segment spans residues 86-90; sequence CRRRY. Residues 91–111 traverse the membrane as a helical segment; that stretch reads MILTYLLLMLIVYIFECASCI. Over 112-229 the chain is Extracellular; sequence TSYTHRDYMV…HIGHAIDSYT (118 aa). An N-linked (GlcNAc...) asparagine glycan is attached at Asn169. Residues 230-251 form a helical membrane-spanning segment; it reads WGISWFGFAILMWTLPVMLIAM. The Cytoplasmic segment spans residues 252-257; it reads YFYTTL.

It belongs to the tetraspanin (TM4SF) family. Homodimer; disulfide-linked. Interacts with uroplakin-2 (UPK2). Binds to uropathogenic E.coli fimH.

The protein resides in the membrane. Functionally, component of the asymmetric unit membrane (AUM); a highly specialized biomembrane elaborated by terminally differentiated urothelial cells. May play an important role in normal bladder epithelial physiology, possibly in regulating membrane permeability of superficial umbrella cells or in stabilizing the apical membrane through AUM/cytoskeletal interactions. The polypeptide is Uroplakin-1a (Upk1a) (Mus musculus (Mouse)).